The following is a 168-amino-acid chain: Photosystem I assembly protein Ycf3 (168 aa).

TPR repeat units follow at residues 35 to 68, 72 to 105, and 120 to 153; these read AFTY…EIDP, SYIL…NPFL, and GEQA…TPGN.

The protein belongs to the Ycf3 family.

The protein localises to the plastid. It is found in the chloroplast thylakoid membrane. Its function is as follows. Essential for the assembly of the photosystem I (PSI) complex. May act as a chaperone-like factor to guide the assembly of the PSI subunits. This is Photosystem I assembly protein Ycf3 from Liriodendron tulipifera (Tuliptree).